Reading from the N-terminus, the 495-residue chain is ATP synthase subunit beta, chloroplastic (495 aa).

Position 172–179 (172–179 (GGAGVGKT)) interacts with ATP.

The protein belongs to the ATPase alpha/beta chains family. As to quaternary structure, F-type ATPases have 2 components, CF(1) - the catalytic core - and CF(0) - the membrane proton channel. CF(1) has five subunits: alpha(3), beta(3), gamma(1), delta(1), epsilon(1). CF(0) has four main subunits: a(1), b(1), b'(1) and c(9-12).

It is found in the plastid. It localises to the chloroplast thylakoid membrane. It catalyses the reaction ATP + H2O + 4 H(+)(in) = ADP + phosphate + 5 H(+)(out). Its function is as follows. Produces ATP from ADP in the presence of a proton gradient across the membrane. The catalytic sites are hosted primarily by the beta subunits. The sequence is that of ATP synthase subunit beta, chloroplastic from Scilla messeniaca (Greek squill).